The following is a 210-amino-acid chain: MSDAKELKQVLTGPIVNNNPIALQVLGVCSALAVTSKLETALVMALALTAVTAFSNLFISMIRNHIPSSVRIIVQMTIIASLVIVVDQLLQAYAYQISKQLSVFVGLIITNCIVMGRAEAYAMKTPPMMSFMDGIGNGLGYGAILLAVGFVRELFGNGSLFGVQILHKISEGGWYQPNGLLLLPPSAFFLIGILIWIIRTYKPEQVEAKG.

6 consecutive transmembrane segments (helical) span residues 14 to 34 (PIVN…ALAV), 42 to 62 (LVMA…ISMI), 72 to 92 (IIVQ…LLQA), 103 to 123 (VFVG…AYAM), 131 to 151 (FMDG…VGFV), and 178 to 198 (NGLL…IWII).

It belongs to the NqrDE/RnfAE family. In terms of assembly, composed of six subunits; NqrA, NqrB, NqrC, NqrD, NqrE and NqrF.

It is found in the cell inner membrane. It carries out the reaction a ubiquinone + n Na(+)(in) + NADH + H(+) = a ubiquinol + n Na(+)(out) + NAD(+). Its function is as follows. NQR complex catalyzes the reduction of ubiquinone-1 to ubiquinol by two successive reactions, coupled with the transport of Na(+) ions from the cytoplasm to the periplasm. NqrA to NqrE are probably involved in the second step, the conversion of ubisemiquinone to ubiquinol. This Shewanella sp. (strain ANA-3) protein is Na(+)-translocating NADH-quinone reductase subunit D.